The sequence spans 104 residues: ATP-dependent Clp protease adapter protein ClpS (104 aa).

This sequence belongs to the ClpS family. Binds to the N-terminal domain of the chaperone ClpA.

Functionally, involved in the modulation of the specificity of the ClpAP-mediated ATP-dependent protein degradation. This is ATP-dependent Clp protease adapter protein ClpS from Nitratidesulfovibrio vulgaris (strain ATCC 29579 / DSM 644 / CCUG 34227 / NCIMB 8303 / VKM B-1760 / Hildenborough) (Desulfovibrio vulgaris).